The chain runs to 209 residues: Kynurenine formamidase (209 aa).

Substrate is bound at residue W18. Zn(2+) contacts are provided by H48, H52, and D54. H58 serves as the catalytic Proton donor/acceptor. 2 residues coordinate Zn(2+): H160 and E172.

It belongs to the Cyclase 1 superfamily. KynB family. As to quaternary structure, homodimer. Zn(2+) is required as a cofactor.

It carries out the reaction N-formyl-L-kynurenine + H2O = L-kynurenine + formate + H(+). It participates in amino-acid degradation; L-tryptophan degradation via kynurenine pathway; L-kynurenine from L-tryptophan: step 2/2. In terms of biological role, catalyzes the hydrolysis of N-formyl-L-kynurenine to L-kynurenine, the second step in the kynurenine pathway of tryptophan degradation. This chain is Kynurenine formamidase, found in Paraburkholderia phymatum (strain DSM 17167 / CIP 108236 / LMG 21445 / STM815) (Burkholderia phymatum).